Reading from the N-terminus, the 310-residue chain is L-lactate dehydrogenase (310 aa).

Val11, Asp32, and Arg37 together coordinate NAD(+). Substrate contacts are provided by residues Gln79, Arg85, and 117-120; that span reads NPVD. NAD(+) is bound by residues 115 to 117 and Thr140; that span reads VTN. 145–148 provides a ligand contact to substrate; that stretch reads DTAR. Positions 150 and 165 each coordinate beta-D-fructose 1,6-bisphosphate. His172 acts as the Proton acceptor in catalysis. At Tyr221 the chain carries Phosphotyrosine. Thr230 contributes to the substrate binding site.

Belongs to the LDH/MDH superfamily. LDH family. As to quaternary structure, homotetramer.

It is found in the cytoplasm. The enzyme catalyses (S)-lactate + NAD(+) = pyruvate + NADH + H(+). It participates in fermentation; pyruvate fermentation to lactate; (S)-lactate from pyruvate: step 1/1. Its activity is regulated as follows. Allosterically activated by fructose 1,6-bisphosphate (FBP). Its function is as follows. Catalyzes the conversion of lactate to pyruvate. In Fervidobacterium nodosum (strain ATCC 35602 / DSM 5306 / Rt17-B1), this protein is L-lactate dehydrogenase.